The sequence spans 146 residues: Anti-sigma F factor (146 aa).

This sequence belongs to the anti-sigma-factor family.

The enzyme catalyses L-seryl-[protein] + ATP = O-phospho-L-seryl-[protein] + ADP + H(+). It catalyses the reaction L-threonyl-[protein] + ATP = O-phospho-L-threonyl-[protein] + ADP + H(+). Functionally, binds to sigma F and blocks its ability to form an RNA polymerase holoenzyme (E-sigma F). Phosphorylates SpoIIAA on a serine residue. This phosphorylation may enable SpoIIAA to act as an anti-anti-sigma factor that counteracts SpoIIAB and thus releases sigma F from inhibition. In Geobacillus sp. (strain WCH70), this protein is Anti-sigma F factor.